The sequence spans 73 residues: Antimicrobial peptide 143 (73 aa).

The N-terminal stretch at 1–22 (MKVKCLLAVFLIVLIAAEHCQA) is a signal peptide. Lys-38 is subject to Lysine amide. Residues 44 to 73 (ELGTQFRPQQKNFMRREIDLERLFAEMPDY) constitute a propeptide that is removed on maturation.

It belongs to the non-disulfide-bridged peptide (NDBP) superfamily. Short antimicrobial peptide (group 4) family. As to expression, expressed by the venom gland.

The protein resides in the secreted. Its subcellular location is the target cell membrane. In terms of biological role, cationic host defense peptide that have antibacterial activity by breaking membranes. Is more effective on Gram-positive than on Gram-negative bacteria. The protein is Antimicrobial peptide 143 of Lychas mucronatus (Chinese swimming scorpion).